The primary structure comprises 290 residues: 33 kDa chaperonin (290 aa).

Disulfide bonds link Cys-236–Cys-238 and Cys-269–Cys-272.

This sequence belongs to the HSP33 family. Under oxidizing conditions two disulfide bonds are formed involving the reactive cysteines. Under reducing conditions zinc is bound to the reactive cysteines and the protein is inactive.

The protein localises to the cytoplasm. Its function is as follows. Redox regulated molecular chaperone. Protects both thermally unfolding and oxidatively damaged proteins from irreversible aggregation. Plays an important role in the bacterial defense system toward oxidative stress. This chain is 33 kDa chaperonin, found in Acholeplasma laidlawii (strain PG-8A).